The primary structure comprises 154 residues: MCWLRAWGQILLPVFLSLFLIQLLISFSENGFIHSPRNNQKPRDGNEEECAVKKSCQLCTEDKKCVWCSEEKACKKYCFPYFGCRFSSIYWLNCKVDMFGIMMLLLIAVLITGFVWYCCAYHFYLQDLNRNRVYFYGRRETVPIHDRSATVYDE.

The signal sequence occupies residues methionine 1–serine 26. The Extracellular portion of the chain corresponds to phenylalanine 27 to aspartate 97. A helical membrane pass occupies residues methionine 98–cysteine 118. The Cytoplasmic portion of the chain corresponds to cysteine 119–glutamate 154.

The protein localises to the membrane. The polypeptide is PTTG1IP family member 2 (Homo sapiens (Human)).